The following is a 247-amino-acid chain: MQTQVLFEHPLNEKMRTWLRIEFLIQQLTVNLPIVDHAGALHFFRNVSELLDVFERGEVRTELLKELDRQQRKLQTWIGVPGVDQSRIEALIQQLKAAGSVLISAPRIGQFLREDRLIALVRQRLSIPGGCCSFDLPTLHIWLHLPQAQRDSQVETWIASLNPLTQALTMVLDLIRQSAPFRKQTSLNGFYQDNGGDADLLRLNLSLDSQLYPQISGHKSRFAIRFMPLDSENGQVPERLDFELACC.

This sequence belongs to the ZapD family. As to quaternary structure, interacts with FtsZ.

The protein localises to the cytoplasm. In terms of biological role, cell division factor that enhances FtsZ-ring assembly. Directly interacts with FtsZ and promotes bundling of FtsZ protofilaments, with a reduction in FtsZ GTPase activity. The polypeptide is Cell division protein ZapD (Shigella boydii serotype 18 (strain CDC 3083-94 / BS512)).